A 535-amino-acid chain; its full sequence is MDQGAPAKPSEQKVPSLRTRWEILLLTLCLLHGSSMTPPHRRSHSRWLQAGSPQFRTHLYNVEAHTAPTPLCCWKNSLSGTNALRGPRLVTGNTGGAVTIHCHYAPSSVNRHQRKYWCRLGSPLWICHTVVSTNQYTHPDYRGRAALTDIPQSGLFVVRLLRLSLGDVGLYRCGIGDRNDMLFFSVNLTVSAGPSNTTYAAAPASGEPTTASPGAASSAGNGWTSGITQILEGSGSEWDRTVPTTGTSKTTSSANGRQTLRTARTMVPGTGSREEGSIRAAVPTPEGPSPKSRSMSSTTQGVWLWSTRNSVTPSVTTSEGRRQGTTPETDGPRDETDVRVSPEAPRKTTGTTRPSALISEHVTWETLQDKTEVSKQQMLHSLEELSPAPSAQTLNATCLEVASEEGRSIDGSLENTTEESSPPTPSQLSVAGPVWVSVKGPSMKSALMEGESHTRILTPVSTVLALLLIAALILLKRSLGRQRTSQKKERVPRITLIQMTHFLPDKLPDEGKNFQQSNLLPPQASLTVLENDPRP.

An N-terminal signal peptide occupies residues 1–35 (MDQGAPAKPSEQKVPSLRTRWEILLLTLCLLHGSS). At 36–455 (MTPPHRRSHS…ALMEGESHTR (420 aa)) the chain is on the extracellular side. Positions 95-117 (GGAVTIHCHYAPSSVNRHQRKYW) are mediates immunoglobulin Fc fragment-binding. Positions 95–189 (GGAVTIHCHY…DMLFFSVNLT (95 aa)) constitute an Ig-like V-type domain. An intrachain disulfide couples cysteine 102 to cysteine 173. An N-linked (GlcNAc...) asparagine glycan is attached at asparagine 187. Disordered regions lie at residues 201-360 (AAPA…LISE) and 405-430 (EGRS…QLSV). 2 stretches are compositionally biased toward low complexity: residues 208–220 (PTTA…SSAG) and 241–253 (TVPT…TTSS). Residues 291-328 (KSRSMSSTTQGVWLWSTRNSVTPSVTTSEGRRQGTTPE) show a composition bias toward polar residues. Positions 330-346 (DGPRDETDVRVSPEAPR) are enriched in basic and acidic residues. Polar residues predominate over residues 413–429 (LENTTEESSPPTPSQLS). The chain crosses the membrane as a helical span at residues 456-476 (ILTPVSTVLALLLIAALILLK). Over 477-535 (RSLGRQRTSQKKERVPRITLIQMTHFLPDKLPDEGKNFQQSNLLPPQASLTVLENDPRP) the chain is Cytoplasmic. The tract at residues 507 to 535 (LPDEGKNFQQSNLLPPQASLTVLENDPRP) is disordered. Positions 513-528 (NFQQSNLLPPQASLTV) are enriched in polar residues.

Interacts with IGHM; this interaction facilitates the endocytosis of IgM-coated microbes and IgM-antigen immune complexes. N-glycosylated. In terms of tissue distribution, expressed in several tissues including thymus, spleen, liver, kidney, small and large intestine, testis and placenta. Expressed by oligodendrocytes, B-cells and macrophages but not granulocytes, T-cells or NK cells (at protein level).

The protein resides in the cell membrane. Its function is as follows. Functions as a receptor for the Fc fragment of IgA and IgM. Binds IgA and IgM with high affinity and mediates their endocytosis. May function in the immune response to microbes mediated by IgA and IgM. This chain is High affinity immunoglobulin alpha and immunoglobulin mu Fc receptor (Fcamr), found in Mus musculus (Mouse).